A 319-amino-acid chain; its full sequence is Ribonuclease Z (319 aa).

Residues His-62, His-64, Asp-66, His-67, His-145, Asp-216, and His-274 each coordinate Zn(2+). The active-site Proton acceptor is the Asp-66.

The protein belongs to the RNase Z family. As to quaternary structure, homodimer. Requires Zn(2+) as cofactor.

The catalysed reaction is Endonucleolytic cleavage of RNA, removing extra 3' nucleotides from tRNA precursor, generating 3' termini of tRNAs. A 3'-hydroxy group is left at the tRNA terminus and a 5'-phosphoryl group is left at the trailer molecule.. Functionally, zinc phosphodiesterase, which displays some tRNA 3'-processing endonuclease activity. Probably involved in tRNA maturation, by removing a 3'-trailer from precursor tRNA. The protein is Ribonuclease Z of Synechococcus sp. (strain CC9605).